Reading from the N-terminus, the 302-residue chain is Elongation factor Ts (302 aa).

Residues 80–83 (TDFV) form an involved in Mg(2+) ion dislocation from EF-Tu region.

This sequence belongs to the EF-Ts family.

The protein resides in the cytoplasm. Associates with the EF-Tu.GDP complex and induces the exchange of GDP to GTP. It remains bound to the aminoacyl-tRNA.EF-Tu.GTP complex up to the GTP hydrolysis stage on the ribosome. This chain is Elongation factor Ts, found in Methylibium petroleiphilum (strain ATCC BAA-1232 / LMG 22953 / PM1).